The chain runs to 409 residues: tRNA-specific 2-thiouridylase MnmA (409 aa).

ATP-binding positions include 40–47 (GLSGGVDS) and L66. C127 serves as the catalytic Nucleophile. C127 and C237 form a disulfide bridge. G152 contacts ATP. The segment at 156–179 (RIRHREDPEPQQALPGDSSGRHQL) is disordered. Residues 187–189 (KDQ) form an interaction with tRNA region. The active-site Cysteine persulfide intermediate is the C237. An interaction with tRNA region spans residues 342 to 343 (RY).

This sequence belongs to the MnmA/TRMU family.

Its subcellular location is the cytoplasm. It catalyses the reaction S-sulfanyl-L-cysteinyl-[protein] + uridine(34) in tRNA + AH2 + ATP = 2-thiouridine(34) in tRNA + L-cysteinyl-[protein] + A + AMP + diphosphate + H(+). Functionally, catalyzes the 2-thiolation of uridine at the wobble position (U34) of tRNA, leading to the formation of s(2)U34. This chain is tRNA-specific 2-thiouridylase MnmA, found in Prochlorococcus marinus (strain MIT 9303).